The following is a 144-amino-acid chain: UPF0102 protein BMA2801 (144 aa).

Positions 1 to 28 (MCHAREASPGTGEPEAAPRDNFPRAAGS) are disordered.

Belongs to the UPF0102 family.

This is UPF0102 protein BMA2801 from Burkholderia mallei (strain ATCC 23344).